The sequence spans 298 residues: ADP/ATP translocase 1 (298 aa).

Residues 1–7 are Mitochondrial intermembrane-facing; it reads MGDHAWS. G2 bears the N-acetylglycine mark. Residues 6–98 form a Solcar 1 repeat; it reads WSFLKDFLAG…FAFKDKYKQL (93 aa). S7 carries the phosphoserine modification. A helical transmembrane segment spans residues 8–37; the sequence is FLKDFLAGGVAAAVSKTAVAPIERVKLLLQ. The Mitochondrial matrix segment spans residues 38–74; sequence VQHASKQISAEKQYKGIIDCVVRIPKEQGFLSFWRGN. K52 is modified (N6,N6,N6-trimethyllysine). Residues 75–99 form a helical membrane-spanning segment; that stretch reads LANVIRYFPTQALNFAFKDKYKQLF. Positions 80 and 92 each coordinate ADP. The Mitochondrial intermembrane segment spans residues 100 to 109; that stretch reads LGGVDRHKQF. A helical membrane pass occupies residues 110 to 130; it reads WRYFAGNLASGGAAGATSLCF. 2 Solcar repeats span residues 111–201 and 212–297; these read RYFA…AKGM and VSWM…IKKY. The Mitochondrial matrix segment spans residues 131–178; sequence VYPLDFARTRLAADVGKGAAQREFHGLGDCIIKIFKSDGLRGLYQGFN. K147 carries the post-translational modification N6-succinyllysine. Residue C160 is modified to S-nitrosocysteine. Residues 179 to 199 form a helical membrane-spanning segment; sequence VSVQGIIIYRAAYFGVYDTAK. Residues 200-210 are Mitochondrial intermembrane-facing; the sequence is GMLPDPKNVHI. Residues 211-231 traverse the membrane as a helical segment; sequence FVSWMIAQSVTAVAGLVSYPF. Topologically, residues 232–273 are mitochondrial matrix; the sequence is DTVRRRMMMQSGRKGADIMYTGTVDCWRKIAKDEGAKAFFKG. R235 contacts ADP. Residues 235-240 form an important for transport activity region; that stretch reads RRRMMM. Positions 235-240 match the Nucleotide carrier signature motif motif; sequence RRRMMM. N6-succinyllysine is present on residues K245 and K272. A helical transmembrane segment spans residues 274–291; the sequence is AWSNVLRGMGGAFVLVLY. Residues 292–298 lie on the Mitochondrial intermembrane side of the membrane; it reads DEIKKYV.

This sequence belongs to the mitochondrial carrier (TC 2.A.29) family. As to quaternary structure, monomer. Found in a complex with ARL2, ARL2BP and SLC25A4/ANT1. Interacts with ARL2BP. Interacts with ARHGAP11B, thereby inhibiting the mitochondrial permeability transition pore (mPTP). Interacts with TIMM44; leading to inhibit the presequence translocase TIMM23, thereby promoting stabilization of PINK1. (Microbial infection) Interacts with HIV-1 Vpr. Post-translationally, under cell death induction, transglutaminated by TGM2. Transglutamination leads to formation of covalent cross-links between a glutamine and the epsilon-amino group of a lysine residue, forming polymers. As to expression, expressed in erythrocytes (at protein level).

The protein localises to the mitochondrion inner membrane. It is found in the membrane. It catalyses the reaction ADP(in) + ATP(out) = ADP(out) + ATP(in). It carries out the reaction H(+)(in) = H(+)(out). With respect to regulation, the matrix-open state (m-state) is inhibited by the membrane-permeable bongkrekic acid (BKA). The cytoplasmic-open state (c-state) is inhibited by the membrane-impermeable toxic inhibitor carboxyatractyloside (CATR). Proton transporter activity is inhibited by ADP:ATP antiporter activity. ADP:ATP antiporter that mediates import of ADP into the mitochondrial matrix for ATP synthesis, and export of ATP out to fuel the cell. Cycles between the cytoplasmic-open state (c-state) and the matrix-open state (m-state): operates by the alternating access mechanism with a single substrate-binding site intermittently exposed to either the cytosolic (c-state) or matrix (m-state) side of the inner mitochondrial membrane. In addition to its ADP:ATP antiporter activity, also involved in mitochondrial uncoupling and mitochondrial permeability transition pore (mPTP) activity. Plays a role in mitochondrial uncoupling by acting as a proton transporter: proton transport uncouples the proton flows via the electron transport chain and ATP synthase to reduce the efficiency of ATP production and cause mitochondrial thermogenesis. Proton transporter activity is inhibited by ADP:ATP antiporter activity, suggesting that SLC25A4/ANT1 acts as a master regulator of mitochondrial energy output by maintaining a delicate balance between ATP production (ADP:ATP antiporter activity) and thermogenesis (proton transporter activity). Proton transporter activity requires free fatty acids as cofactor, but does not transport it. Also plays a key role in mPTP opening, a non-specific pore that enables free passage of the mitochondrial membranes to solutes of up to 1.5 kDa, and which contributes to cell death. It is however unclear if SLC25A4/ANT1 constitutes a pore-forming component of mPTP or regulates it. Acts as a regulator of mitophagy independently of ADP:ATP antiporter activity: promotes mitophagy via interaction with TIMM44, leading to inhibit the presequence translocase TIMM23, thereby promoting stabilization of PINK1. The polypeptide is ADP/ATP translocase 1 (Homo sapiens (Human)).